Reading from the N-terminus, the 242-residue chain is HTH domain-truncated transcriptional regulator QseD (242 aa).

Belongs to the LysR transcriptional regulatory family.

Functionally, represses EHEC virulence expression. Down-regulates expression of LEE (locus of enterocyte effacement) and iraD genes, and alters AE (attaching and effacing) lesion formation. May regulate transcription through interactions with another HTH DNA-binding protein. The chain is HTH domain-truncated transcriptional regulator QseD (qseD) from Escherichia coli O157:H7.